We begin with the raw amino-acid sequence, 257 residues long: ATP synthase subunit a (257 aa).

Transmembrane regions (helical) follow at residues 34–54 (ITNI…FSIL), 93–113 (YFPF…IGMV), 122–142 (HFIL…VLGF), 149–169 (FFSL…LVLI), 187–207 (ANIL…YNIM), and 210–230 (GIIF…FSGL).

The protein belongs to the ATPase A chain family. As to quaternary structure, F-type ATPases have 2 components, CF(1) - the catalytic core - and CF(0) - the membrane proton channel. CF(1) has five subunits: alpha(3), beta(3), gamma(1), delta(1), epsilon(1). CF(0) has three main subunits: a, b and c.

It is found in the mitochondrion inner membrane. Mitochondrial membrane ATP synthase (F(1)F(0) ATP synthase or Complex V) produces ATP from ADP in the presence of a proton gradient across the membrane which is generated by electron transport complexes of the respiratory chain. F-type ATPases consist of two structural domains, F(1) - containing the extramembraneous catalytic core and F(0) - containing the membrane proton channel, linked together by a central stalk and a peripheral stalk. During catalysis, ATP synthesis in the catalytic domain of F(1) is coupled via a rotary mechanism of the central stalk subunits to proton translocation. Key component of the proton channel; it may play a direct role in the translocation of protons across the membrane. The sequence is that of ATP synthase subunit a (ATP6) from Cochliobolus heterostrophus (Southern corn leaf blight fungus).